Consider the following 689-residue polypeptide: Small ribosomal subunit protein mS39 (689 aa).

The N-terminal 37 residues, 1 to 37, are a transit peptide targeting the mitochondrion; it reads MAGVSAVRWLGLRSRLGQPLTGRRAGLCKQARSCRFY. Lysine 126 carries the post-translational modification N6-acetyllysine. PPR repeat units lie at residues 149–183, 184–219, 255–289, 290–330, 331–367, 368–404, 412–446, 454–488, 489–523, and 572–606; these read IKDISEAALKERIELRKVKASVDMFDQLLQAGTTV, SLETTNSLLDLLCYFGDQEPSTDYHFQQTEQSEALE, NAHSYCTMIRGMVKHRAYEQALNLYTELLNNRLHA, DVYT…KVKP, NLQTFNTILKCLRRFHVFARSPALRILREMKAIGIEP, SLATYHHIIHVFDQPGDPLKRSSFIIYDIMNELMGKR, DDKFFQSAMSICSSLRDLELAYQVHGLLNTGDNWK, RNFYYSKFFDLICLMEQIDVTLKWYEDLIPSVYFP, HSQTLIHLLQALDVANRLEMIPKIWKDSKEYGHTF, and PATSLYCIAILFLRAGRTQEAWNMLELFRKHNKIP. Residues 665–689 form a disordered region; sequence NLTALTSDSDTDSSSDSDSDTSEGK. The span at 673–689 shows a compositional bias: acidic residues; that stretch reads SDTDSSSDSDSDTSEGK.

It belongs to the mitochondrion-specific ribosomal protein mS39 family. As to quaternary structure, component of the mitochondrial ribosome small subunit (28S) which comprises a 12S rRNA and about 30 distinct proteins. Associated with the 12S mitochondrial rRNA (12S mt-rRNA).

The protein resides in the mitochondrion. In terms of biological role, mitochondrial RNA-binding protein that has a role in mitochondrial translation. The polypeptide is Small ribosomal subunit protein mS39 (PTCD3) (Pongo abelii (Sumatran orangutan)).